Consider the following 185-residue polypeptide: Ribose 1,5-bisphosphate phosphokinase PhnN (185 aa).

10–17 is a binding site for ATP; it reads GPSGSGKD.

This sequence belongs to the ribose 1,5-bisphosphokinase family.

It carries out the reaction alpha-D-ribose 1,5-bisphosphate + ATP = 5-phospho-alpha-D-ribose 1-diphosphate + ADP. The protein operates within metabolic intermediate biosynthesis; 5-phospho-alpha-D-ribose 1-diphosphate biosynthesis; 5-phospho-alpha-D-ribose 1-diphosphate from D-ribose 5-phosphate (route II): step 3/3. Functionally, catalyzes the phosphorylation of ribose 1,5-bisphosphate to 5-phospho-D-ribosyl alpha-1-diphosphate (PRPP). This Pseudomonas paraeruginosa (strain DSM 24068 / PA7) (Pseudomonas aeruginosa (strain PA7)) protein is Ribose 1,5-bisphosphate phosphokinase PhnN.